The chain runs to 225 residues: Phosphoribosylformylglycinamidine synthase subunit PurQ (225 aa).

One can recognise a Glutamine amidotransferase type-1 domain in the interval 4 to 225 (RVGVITFPGT…YSVLDSVISA (222 aa)). Cys-87 functions as the Nucleophile in the catalytic mechanism. Residues His-196 and Glu-198 contribute to the active site.

As to quaternary structure, part of the FGAM synthase complex composed of 1 PurL, 1 PurQ and 2 PurS subunits.

The protein resides in the cytoplasm. The enzyme catalyses N(2)-formyl-N(1)-(5-phospho-beta-D-ribosyl)glycinamide + L-glutamine + ATP + H2O = 2-formamido-N(1)-(5-O-phospho-beta-D-ribosyl)acetamidine + L-glutamate + ADP + phosphate + H(+). It catalyses the reaction L-glutamine + H2O = L-glutamate + NH4(+). It functions in the pathway purine metabolism; IMP biosynthesis via de novo pathway; 5-amino-1-(5-phospho-D-ribosyl)imidazole from N(2)-formyl-N(1)-(5-phospho-D-ribosyl)glycinamide: step 1/2. Functionally, part of the phosphoribosylformylglycinamidine synthase complex involved in the purines biosynthetic pathway. Catalyzes the ATP-dependent conversion of formylglycinamide ribonucleotide (FGAR) and glutamine to yield formylglycinamidine ribonucleotide (FGAM) and glutamate. The FGAM synthase complex is composed of three subunits. PurQ produces an ammonia molecule by converting glutamine to glutamate. PurL transfers the ammonia molecule to FGAR to form FGAM in an ATP-dependent manner. PurS interacts with PurQ and PurL and is thought to assist in the transfer of the ammonia molecule from PurQ to PurL. This chain is Phosphoribosylformylglycinamidine synthase subunit PurQ, found in Rhodococcus jostii (strain RHA1).